The following is a 360-amino-acid chain: GTPase Obg (360 aa).

An Obg domain is found at 1 to 156 (MFVDSVEIII…KCVRLELKLI (156 aa)). In terms of domain architecture, OBG-type G spans 157 to 360 (ADIGLVGFPN…LKFVLLKALQ (204 aa)). GTP is bound by residues 163–170 (GFPNAGKS), 188–192 (FTTLV), 210–213 (DIPG), 279–282 (NKCD), and 341–343 (SAV). Mg(2+)-binding residues include Ser170 and Thr190.

This sequence belongs to the TRAFAC class OBG-HflX-like GTPase superfamily. OBG GTPase family. Monomer. It depends on Mg(2+) as a cofactor.

The protein resides in the cytoplasm. An essential GTPase which binds GTP, GDP and possibly (p)ppGpp with moderate affinity, with high nucleotide exchange rates and a fairly low GTP hydrolysis rate. Plays a role in control of the cell cycle, stress response, ribosome biogenesis and in those bacteria that undergo differentiation, in morphogenesis control. This chain is GTPase Obg, found in Helicobacter pylori (strain P12).